The chain runs to 222 residues: N-(5'-phosphoribosyl)anthranilate isomerase (222 aa).

The protein belongs to the TrpF family.

The catalysed reaction is N-(5-phospho-beta-D-ribosyl)anthranilate = 1-(2-carboxyphenylamino)-1-deoxy-D-ribulose 5-phosphate. The protein operates within amino-acid biosynthesis; L-tryptophan biosynthesis; L-tryptophan from chorismate: step 3/5. This Brucella abortus (strain S19) protein is N-(5'-phosphoribosyl)anthranilate isomerase.